Here is a 322-residue protein sequence, read N- to C-terminus: ATP-dependent 6-phosphofructokinase (322 aa).

ATP is bound by residues Gly-12, 73 to 74 (RF), and 103 to 106 (GDGT). Residue Asp-104 participates in Mg(2+) binding. 126–128 (TID) lines the substrate pocket. Asp-128 acts as the Proton acceptor in catalysis. ADP is bound at residue Arg-155. Substrate-binding positions include Arg-163 and 170–172 (MGR). ADP-binding positions include 186-188 (GSE), Lys-212, and 214-216 (KPS). Substrate is bound by residues Glu-223, Arg-245, and 251-254 (HTQR).

This sequence belongs to the phosphofructokinase type A (PFKA) family. ATP-dependent PFK group I subfamily. Prokaryotic clade 'B1' sub-subfamily. As to quaternary structure, homotetramer. Mg(2+) serves as cofactor.

The protein localises to the cytoplasm. The catalysed reaction is beta-D-fructose 6-phosphate + ATP = beta-D-fructose 1,6-bisphosphate + ADP + H(+). It participates in carbohydrate degradation; glycolysis; D-glyceraldehyde 3-phosphate and glycerone phosphate from D-glucose: step 3/4. With respect to regulation, allosterically activated by ADP and other diphosphonucleosides, and allosterically inhibited by phosphoenolpyruvate. In terms of biological role, catalyzes the phosphorylation of D-fructose 6-phosphate to fructose 1,6-bisphosphate by ATP, the first committing step of glycolysis. The sequence is that of ATP-dependent 6-phosphofructokinase from Mesomycoplasma hyopneumoniae (strain 7448) (Mycoplasma hyopneumoniae).